A 196-amino-acid chain; its full sequence is Peptide deformylase (196 aa).

The Fe cation site is built by Cys105 and His147. Glu148 is a catalytic residue. His151 provides a ligand contact to Fe cation.

Belongs to the polypeptide deformylase family. Requires Fe(2+) as cofactor.

It carries out the reaction N-terminal N-formyl-L-methionyl-[peptide] + H2O = N-terminal L-methionyl-[peptide] + formate. In terms of biological role, removes the formyl group from the N-terminal Met of newly synthesized proteins. Requires at least a dipeptide for an efficient rate of reaction. N-terminal L-methionine is a prerequisite for activity but the enzyme has broad specificity at other positions. The polypeptide is Peptide deformylase (Flavobacterium johnsoniae (strain ATCC 17061 / DSM 2064 / JCM 8514 / BCRC 14874 / CCUG 350202 / NBRC 14942 / NCIMB 11054 / UW101) (Cytophaga johnsonae)).